Here is an 874-residue protein sequence, read N- to C-terminus: Probable RNA-directed RNA polymerase (874 aa).

The protein belongs to the totiviridae RNA-directed RNA polymerase family.

The enzyme catalyses RNA(n) + a ribonucleoside 5'-triphosphate = RNA(n+1) + diphosphate. Functionally, RNA-dependent RNA polymerase which replicates the viral genome. Catalyzes the transcription of fully conservative plus-strand genomic RNAs that are extruded from the virion into the cytoplasm where they function as mRNAs for translation of viral proteins and also as substrates for encapsidation to form new virions. Once encapsidated, the positive strand is converted to dsRNA by the RNA-directed RNA polymerase. Displays ssRNA-binding activity. This Leishmania major (LRV-1-1) protein is Probable RNA-directed RNA polymerase (ORF3).